Reading from the N-terminus, the 157-residue chain is MSYNITNPNQYQYFAAVWAEPIPMLNQCMSALSQSYQTQAARDTVRQQFSNLLSAVVTPSQRFPDTGSRVYVNSAVIKPLYEALMKSFDTRNRIIETEEESRPSASEVANATQRVDDATVAIRSQIQLLLSELSNGHGYMNRAEFEALLPWTTAPAT.

Serine 2 carries the N-acetylserine; by host modification.

It belongs to the virgaviridae capsid protein family.

The protein localises to the virion. Its function is as follows. Capsid protein self-assembles to form rod-shaped virions about 18 nm in diameter with a central canal enclosing the viral genomic RNA. In Brassicaceae (TVCV), this protein is Capsid protein (CP).